Consider the following 727-residue polypeptide: NADH-ubiquinone oxidoreductase 75 kDa subunit, mitochondrial (727 aa).

The transit peptide at 1–23 (MLRIPVRKALVVLSKSPKGCVRT) directs the protein to the mitochondrion. Residues 30–108 (NLIEVFVDGQ…GWNILTNSKK (79 aa)) form the 2Fe-2S ferredoxin-type domain. [2Fe-2S] cluster-binding residues include Cys64, Cys75, and Cys78. Position 84 is an N6-acetyllysine (Lys84). Residue Cys92 participates in [2Fe-2S] cluster binding. One can recognise a 4Fe-4S His(Cys)3-ligated-type domain in the interval 108 to 147 (KSKKAREGVMEFLLANHPLDCPICDQGGECDLQDQSMMFG). Residues His124, Cys128, Cys131, Cys137, Cys176, Cys179, Cys182, and Cys226 each contribute to the [4Fe-4S] cluster site. In terms of domain architecture, 4Fe-4S Mo/W bis-MGD-type spans 245–301 (TRKTESIDVMDAVGSNIVVSTRTGEVMRILPRMHEDINEEWISDKTRFAYDGLKRQR). Lys467, Lys499, and Lys709 each carry N6-acetyllysine.

The protein belongs to the complex I 75 kDa subunit family. Core subunit of respiratory chain NADH dehydrogenase (Complex I) which is composed of 45 different subunits. This is the largest subunit of complex I and it is a component of the iron-sulfur (IP) fragment of the enzyme. Complex I associates with ubiquinol-cytochrome reductase complex (Complex III) to form supercomplexes. Interacts with MDM2 and AKAP1. [2Fe-2S] cluster is required as a cofactor. The cofactor is [4Fe-4S] cluster.

It is found in the mitochondrion inner membrane. The enzyme catalyses a ubiquinone + NADH + 5 H(+)(in) = a ubiquinol + NAD(+) + 4 H(+)(out). In terms of biological role, core subunit of the mitochondrial membrane respiratory chain NADH dehydrogenase (Complex I) which catalyzes electron transfer from NADH through the respiratory chain, using ubiquinone as an electron acceptor. Essential for catalysing the entry and efficient transfer of electrons within complex I. Plays a key role in the assembly and stability of complex I and participates in the association of complex I with ubiquinol-cytochrome reductase complex (Complex III) to form supercomplexes. This is NADH-ubiquinone oxidoreductase 75 kDa subunit, mitochondrial (NDUFS1) from Pan troglodytes (Chimpanzee).